We begin with the raw amino-acid sequence, 442 residues long: MITGKELRIISLLTLDTVFFLLEITIGYMSHSLALIADSFHMLNDIISLLVALWAVDVAKNRGPDAKYTYGWKRAEILGALINAVFLIALCFSIMIEALQRLIEPQEIQNPRLVLYVGVAGLISNVVGLFLFHDHGSDSLHSHSHGSVESGNNDLDIESNATHSHSHASLPNDNLAIDEDAISSPGPSGQIGEVLPQSVVNRLSNESQPLLNHDDHDHSHESKKPGHRSLNMHGVFLHVLGDALGNIGVIAAALFIWKTEYSWRYYSDPIVSLIITIIIFSSALPLSRRASRILLQATPSTISADQIQREILAVPGVIAVHDFHVWNLTESIYIASIHVQIDCAPDKFMSSAKLIRKIFHQHGIHSATVQPEFVSGDVNEDIRRRFSIIAGGSPSSSQEAFDSHGNTEHGRKKRSPTAYGATTASSNCIVDDAVNCNTSNCL.

The Cytoplasmic segment spans residues 1–8 (MITGKELR). Residues 9 to 29 (IISLLTLDTVFFLLEITIGYM) form a helical membrane-spanning segment. Residues 30-32 (SHS) are Vacuolar-facing. A helical transmembrane segment spans residues 33 to 53 (LALIADSFHMLNDIISLLVAL). The Cytoplasmic portion of the chain corresponds to 54–75 (WAVDVAKNRGPDAKYTYGWKRA). A helical membrane pass occupies residues 76-96 (EILGALINAVFLIALCFSIMI). At 97–112 (EALQRLIEPQEIQNPR) the chain is on the vacuolar side. A helical transmembrane segment spans residues 113–133 (LVLYVGVAGLISNVVGLFLFH). Residues 134–235 (DHGSDSLHSH…GHRSLNMHGV (102 aa)) are Cytoplasmic-facing. 3 short sequence motifs (histidine repeat) span residues 141–145 (HSHSH), 163–167 (HSHSH), and 216–220 (HDHSH). Disordered regions lie at residues 141 to 170 (HSHSHGSVESGNNDLDIESNATHSHSHASL) and 208 to 227 (QPLLNHDDHDHSHESKKPGH). The span at 149–170 (ESGNNDLDIESNATHSHSHASL) shows a compositional bias: polar residues. Residues 212–224 (NHDDHDHSHESKK) show a composition bias toward basic and acidic residues. A helical transmembrane segment spans residues 236–256 (FLHVLGDALGNIGVIAAALFI). Topologically, residues 257 to 265 (WKTEYSWRY) are vacuolar. Residues 266–286 (YSDPIVSLIITIIIFSSALPL) traverse the membrane as a helical segment. The Cytoplasmic portion of the chain corresponds to 287–442 (SRRASRILLQ…AVNCNTSNCL (156 aa)). Residue lysine 357 forms a Glycyl lysine isopeptide (Lys-Gly) (interchain with G-Cter in ubiquitin) linkage. 3 positions are modified to phosphoserine: serine 387, serine 393, and serine 397. Residues 391 to 419 (GGSPSSSQEAFDSHGNTEHGRKKRSPTAY) are disordered.

The protein belongs to the cation diffusion facilitator (CDF) transporter (TC 2.A.4) family. SLC30A subfamily.

The protein localises to the vacuole membrane. The catalysed reaction is Zn(2+)(in) = Zn(2+)(out). Vacuolar transporter that regulates zinc homeostasis by mediating zinc transport and storage into the vacuole. ZRC1 senses zinc availability in the cytosol, which might be performed through the histidine repeat motifs, and transports zinc from the cytosol to the vacuole if zinc in cytosol is abundant, conferring resistance to zinc toxicity. Plays a role in resistance to zinc shock resulting from sudden influx of zinc into cytoplasm when ZRT1 and ZRT2 are induced in response to zinc depletion. This Saccharomyces cerevisiae (strain ATCC 204508 / S288c) (Baker's yeast) protein is Vacuolar zinc transporter ZRC1.